The following is a 265-amino-acid chain: Protein synthesis inhibitor PD-S2 (265 aa).

2 disulfide bridges follow: Cys-34-Cys-262 and Cys-88-Cys-110. Asn-120 carries N-linked (GlcNAc...) asparagine glycosylation.

It belongs to the ribosome-inactivating protein family. Type 1 RIP subfamily. Post-translationally, glycosylated. In terms of tissue distribution, seeds.

The enzyme catalyses Endohydrolysis of the N-glycosidic bond at one specific adenosine on the 28S rRNA.. Functionally, inhibits protein synthesis in animal cells. Useful as immunotoxin for pharmacological applications. The sequence is that of Protein synthesis inhibitor PD-S2 from Phytolacca dioica (Bella sombra tree).